The chain runs to 250 residues: 2,3-bisphosphoglycerate-dependent phosphoglycerate mutase (250 aa).

Substrate is bound by residues Arg-12–Asn-19, Thr-25–Gly-26, Arg-64, Glu-91–Tyr-94, Lys-102, Arg-118–Arg-119, and Gly-185–Asn-186. The Tele-phosphohistidine intermediate role is filled by His-13. Residue Glu-91 is the Proton donor/acceptor of the active site.

It belongs to the phosphoglycerate mutase family. BPG-dependent PGAM subfamily.

The catalysed reaction is (2R)-2-phosphoglycerate = (2R)-3-phosphoglycerate. It functions in the pathway carbohydrate degradation; glycolysis; pyruvate from D-glyceraldehyde 3-phosphate: step 3/5. Functionally, catalyzes the interconversion of 2-phosphoglycerate and 3-phosphoglycerate. The polypeptide is 2,3-bisphosphoglycerate-dependent phosphoglycerate mutase (Corynebacterium efficiens (strain DSM 44549 / YS-314 / AJ 12310 / JCM 11189 / NBRC 100395)).